Consider the following 478-residue polypeptide: tRNA (guanine-N(7)-)-methyltransferase non-catalytic subunit TRM82 (478 aa).

4 WD repeats span residues 14–53 (SSAD…VLDP), 73–113 (EQKF…GLQQ), 217–258 (GHVS…HIIE), and 263–301 (GHEE…LNEK).

It belongs to the WD repeat TRM82 family. Forms a heterodimer with the catalytic subunit TRM8.

It localises to the nucleus. It functions in the pathway tRNA modification; N(7)-methylguanine-tRNA biosynthesis. Functionally, required for the formation of N(7)-methylguanine at position 46 (m7G46) in tRNA. In the complex, it is required to stabilize and induce conformational changes of the catalytic subunit. This is tRNA (guanine-N(7)-)-methyltransferase non-catalytic subunit TRM82 from Phaeosphaeria nodorum (strain SN15 / ATCC MYA-4574 / FGSC 10173) (Glume blotch fungus).